A 208-amino-acid polypeptide reads, in one-letter code: Small ribosomal subunit protein uS4 (208 aa).

Positions 98–158 constitute an S4 RNA-binding domain; the sequence is RRLDNIVYRL…EKSRKVASIN (61 aa).

It belongs to the universal ribosomal protein uS4 family. As to quaternary structure, part of the 30S ribosomal subunit. Contacts protein S5. The interaction surface between S4 and S5 is involved in control of translational fidelity.

Its function is as follows. One of the primary rRNA binding proteins, it binds directly to 16S rRNA where it nucleates assembly of the body of the 30S subunit. Functionally, with S5 and S12 plays an important role in translational accuracy. The polypeptide is Small ribosomal subunit protein uS4 (Geotalea daltonii (strain DSM 22248 / JCM 15807 / FRC-32) (Geobacter daltonii)).